Here is a 242-residue protein sequence, read N- to C-terminus: ATP synthase subunit a (242 aa).

5 helical membrane-spanning segments follow: residues 21-41 (LSSI…AIIC), 83-103 (AVTL…FSIV), 117-137 (DATV…FYGI), 175-195 (LYGN…LFFN), and 198-218 (AWGW…SIFV).

Belongs to the ATPase A chain family. F-type ATPases have 2 components, CF(1) - the catalytic core - and CF(0) - the membrane proton channel. CF(1) has five subunits: alpha(3), beta(3), gamma(1), delta(1), epsilon(1). CF(0) has three main subunits: a(1), b(2) and c(9-12). The alpha and beta chains form an alternating ring which encloses part of the gamma chain. CF(1) is attached to CF(0) by a central stalk formed by the gamma and epsilon chains, while a peripheral stalk is formed by the delta and b chains.

The protein resides in the cell membrane. Its function is as follows. Key component of the proton channel; it plays a direct role in the translocation of protons across the membrane. This chain is ATP synthase subunit a, found in Staphylococcus aureus (strain Newman).